The following is a 215-amino-acid chain: Floral homeotic protein GLOBOSA (215 aa).

One can recognise an MADS-box domain in the interval 3–57 (RGKIEIKRIENSSNRQVTYSKRRNGIMKKAKEISVLCDAHVSVIIFASSGKMHEF). In terms of domain architecture, K-box spans 84-170 (HEHLDNEINR…QFKLRQMHLD (87 aa)).

It is found in the nucleus. Transcription factor involved in the genetic control of flower development. Acts in conjunction with DEFICIENS (defA). This chain is Floral homeotic protein GLOBOSA (GLO), found in Antirrhinum majus (Garden snapdragon).